A 136-amino-acid polypeptide reads, in one-letter code: MGARKKISAEKRKEALKTMYFAKLQNVPTSPRKMRLVADMIRGMEVNRALGVLKFSSKEAAARVEKLLRSAIANWEQKNERKAESGELFVTKIFVDGGATLKRMRPAPQGRGYRIRKRSNHVTLFVGSKSNNEDQN.

This sequence belongs to the universal ribosomal protein uL22 family. As to quaternary structure, part of the 50S ribosomal subunit.

This protein binds specifically to 23S rRNA; its binding is stimulated by other ribosomal proteins, e.g. L4, L17, and L20. It is important during the early stages of 50S assembly. It makes multiple contacts with different domains of the 23S rRNA in the assembled 50S subunit and ribosome. Its function is as follows. The globular domain of the protein is located near the polypeptide exit tunnel on the outside of the subunit, while an extended beta-hairpin is found that lines the wall of the exit tunnel in the center of the 70S ribosome. This is Large ribosomal subunit protein uL22 from Bacteroides fragilis (strain ATCC 25285 / DSM 2151 / CCUG 4856 / JCM 11019 / LMG 10263 / NCTC 9343 / Onslow / VPI 2553 / EN-2).